We begin with the raw amino-acid sequence, 207 residues long: Dephospho-CoA kinase (207 aa).

The 198-residue stretch at 10–207 folds into the DPCK domain; that stretch reads ILGLTGGIGS…FYLTLRGGQP (198 aa). An ATP-binding site is contributed by 18–23; it reads GSGKSA.

This sequence belongs to the CoaE family.

The protein resides in the cytoplasm. It catalyses the reaction 3'-dephospho-CoA + ATP = ADP + CoA + H(+). The protein operates within cofactor biosynthesis; coenzyme A biosynthesis; CoA from (R)-pantothenate: step 5/5. In terms of biological role, catalyzes the phosphorylation of the 3'-hydroxyl group of dephosphocoenzyme A to form coenzyme A. In Pseudomonas putida (Arthrobacter siderocapsulatus), this protein is Dephospho-CoA kinase.